The chain runs to 379 residues: Spermidine/putrescine import ATP-binding protein PotA (379 aa).

The 231-residue stretch at 10 to 240 folds into the ABC transporter domain; the sequence is VTIDQVSKAY…PATDFVAKFI (231 aa). Residue 42 to 49 participates in ATP binding; that stretch reads GPSGCGKT.

Belongs to the ABC transporter superfamily. Spermidine/putrescine importer (TC 3.A.1.11.1) family. The complex is composed of two ATP-binding proteins (PotA), two transmembrane proteins (PotB and PotC) and a solute-binding protein (PotD).

Its subcellular location is the cell inner membrane. It carries out the reaction ATP + H2O + polyamine-[polyamine-binding protein]Side 1 = ADP + phosphate + polyamineSide 2 + [polyamine-binding protein]Side 1.. Part of the ABC transporter complex PotABCD involved in spermidine/putrescine import. Responsible for energy coupling to the transport system. The chain is Spermidine/putrescine import ATP-binding protein PotA from Treponema pallidum (strain Nichols).